The following is a 522-amino-acid chain: uncharacterized protein (522 aa).

This is an uncharacterized protein from Sinorhizobium fredii (strain NBRC 101917 / NGR234).